The primary structure comprises 365 residues: 2'-hydroxybiphenyl-2-sulfinate desulfinase (365 aa).

The active site involves Cys-27. The 2'-hydroxybiphenyl-2-sulfinate site is built by Cys-27, His-60, and Arg-70. Arg-70 is an active-site residue.

This sequence belongs to the DszB desulfinase family. As to quaternary structure, monomer.

Its subcellular location is the cytoplasm. The enzyme catalyses 2'-hydroxybiphenyl-2-sulfinate + H2O = biphenyl-2-ol + sulfite + H(+). The protein operates within sulfur metabolism; dibenzothiophene degradation. In terms of biological role, catalyzes the third and final step of the '4S' desulfurization pathway that removes covalently bound sulfur from dibenzothiophene (DBT) without breaking carbon-carbon bonds. Oxidizes 2-(2'-hydroxyphenyl)benzene sulphinate (HBPS) to 2-hydroxybiphenyl (HBP) plus sulfite. The rate-limiting step of the '4S' desulfurization pathway. This chain is 2'-hydroxybiphenyl-2-sulfinate desulfinase, found in Rhodococcus erythropolis (Arthrobacter picolinophilus).